A 74-amino-acid chain; its full sequence is Ubiquitin-like protein FUBI (74 aa).

This sequence belongs to the ubiquitin family.

This Mus spicilegus (Steppe mouse) protein is Ubiquitin-like protein FUBI (Fau).